The following is a 311-amino-acid chain: Probable manganese-dependent inorganic pyrophosphatase (311 aa).

Residues His9, Asp13, Asp15, Asp77, His99, and Asp151 each coordinate Mn(2+).

It belongs to the PPase class C family. Mn(2+) serves as cofactor.

The protein localises to the cytoplasm. The catalysed reaction is diphosphate + H2O = 2 phosphate + H(+). This is Probable manganese-dependent inorganic pyrophosphatase from Streptococcus pneumoniae (strain JJA).